Reading from the N-terminus, the 1049-residue chain is Probable disease resistance protein RF9 (1049 aa).

Residues 25–41 are a coiled coil; sequence QGVEDQVTELKRDLNLL. The interval 139–158 is disordered; it reads GYKQPQGDKQREMRPRFSKD. The segment covering 144–158 has biased composition (basic and acidic residues); sequence QGDKQREMRPRFSKD. Residues 147 to 460 form the NB-ARC domain; sequence KQREMRPRFS…AEGIFQPRHY (314 aa). 190–197 serves as a coordination point for ATP; that stretch reads GMGGLGKT. LRR repeat units lie at residues 584–608, 609–634, 657–682, 683–707, 776–799, 800–827, 849–873, 896–923, 945–968, and 990–1015; these read LELLRVLDIHRAKLKGGKLASSIGQ, LIHLRYLNLKHAEVTHIPYSLGNLKL, MQQLRYLALPKDMGRKTKLELSNLVK, LETLKNFSTKNCSLEDLRGMVRLRT, PSHLTTLYLQHCRLEEDPMPILEK, LHQLKELELRRKSFSGKEMVCSSGGFPQ, MPVLHTLDIRDCRKLKQLPDEHLPS, LVHLKELQLLFRSFSGRIMVCAGSGFPQ, MPQLHTLEIRRCPKLKKLPNGFPQ, and MPLLHTLRIWNCPKLKQLPDGLRFIY.

Belongs to the disease resistance NB-LRR family.

In terms of biological role, potential disease resistance protein. This chain is Probable disease resistance protein RF9 (RF9), found in Arabidopsis thaliana (Mouse-ear cress).